Here is a 188-residue protein sequence, read N- to C-terminus: Proline-rich protein 3 (188 aa).

Residues 1–157 (MPKRKKQNQH…DPQVMEDKSD (157 aa)) are disordered. Composition is skewed to pro residues over residues 35-46 (IGPPSLLGPPPM) and 69-82 (LIPP…PPWG). A compositionally biased stretch (low complexity) spans 83 to 96 (RGPIRRGLGPRSSP). Over residues 145 to 157 (PKDDPQVMEDKSD) the composition is skewed to basic and acidic residues. Residues 155-183 (KSDRPVCRHFAKKGHCRYEDLCAFYHPGV) form a C3H1-type zinc finger.

This is Proline-rich protein 3 (PRR3) from Pan troglodytes (Chimpanzee).